The chain runs to 75 residues: Signaling peptide TAXIMIN 1 (75 aa).

An N-terminal signal peptide occupies residues 1-29 (MCDGDCRPLGFLLGLPFAFLSLLLSIIGV).

In terms of tissue distribution, expressed in shoot apical meristems (SAM); mostly specific to the L1 layer in the center of the meristem but also detected in the L2 layer in organ primordia. Also observed in the vasculature of seedling roots.

Its subcellular location is the secreted. Its activity is regulated as follows. Counteracted by the antibiotic cefotaxime during responses to light stress. Signaling peptide involved in the regulation of lateral organs separation, including fruits and leaves. Involved in the perception of and response to light stress via the control of sinapoyl-malate accumulation, a UV-B protecting compound. The polypeptide is Signaling peptide TAXIMIN 1 (Arabidopsis thaliana (Mouse-ear cress)).